Reading from the N-terminus, the 231-residue chain is Phosphatidylserine decarboxylase proenzyme (231 aa).

The active-site Schiff-base intermediate with substrate; via pyruvic acid is the Ser-188. Pyruvic acid (Ser); by autocatalysis is present on Ser-188.

Belongs to the phosphatidylserine decarboxylase family. PSD-A subfamily. Heterodimer of a large membrane-associated beta subunit and a small pyruvoyl-containing alpha subunit. The cofactor is pyruvate. Post-translationally, is synthesized initially as an inactive proenzyme. Formation of the active enzyme involves a self-maturation process in which the active site pyruvoyl group is generated from an internal serine residue via an autocatalytic post-translational modification. Two non-identical subunits are generated from the proenzyme in this reaction, and the pyruvate is formed at the N-terminus of the alpha chain, which is derived from the carboxyl end of the proenzyme. The post-translation cleavage follows an unusual pathway, termed non-hydrolytic serinolysis, in which the side chain hydroxyl group of the serine supplies its oxygen atom to form the C-terminus of the beta chain, while the remainder of the serine residue undergoes an oxidative deamination to produce ammonia and the pyruvoyl prosthetic group on the alpha chain.

The protein localises to the cell membrane. The catalysed reaction is a 1,2-diacyl-sn-glycero-3-phospho-L-serine + H(+) = a 1,2-diacyl-sn-glycero-3-phosphoethanolamine + CO2. Its pathway is phospholipid metabolism; phosphatidylethanolamine biosynthesis; phosphatidylethanolamine from CDP-diacylglycerol: step 2/2. Functionally, catalyzes the formation of phosphatidylethanolamine (PtdEtn) from phosphatidylserine (PtdSer). The polypeptide is Phosphatidylserine decarboxylase proenzyme (Rickettsia akari (strain Hartford)).